A 388-amino-acid polypeptide reads, in one-letter code: 8-amino-7-oxononanoate synthase (388 aa).

R23 is a substrate binding site. 110 to 111 (GF) provides a ligand contact to pyridoxal 5'-phosphate. H135 is a binding site for substrate. S181, H209, and T235 together coordinate pyridoxal 5'-phosphate. The residue at position 238 (K238) is an N6-(pyridoxal phosphate)lysine. Residue T352 coordinates substrate.

This sequence belongs to the class-II pyridoxal-phosphate-dependent aminotransferase family. BioF subfamily. As to quaternary structure, homodimer. It depends on pyridoxal 5'-phosphate as a cofactor.

It catalyses the reaction 6-carboxyhexanoyl-[ACP] + L-alanine + H(+) = (8S)-8-amino-7-oxononanoate + holo-[ACP] + CO2. It participates in cofactor biosynthesis; biotin biosynthesis. Catalyzes the decarboxylative condensation of pimeloyl-[acyl-carrier protein] and L-alanine to produce 8-amino-7-oxononanoate (AON), [acyl-carrier protein], and carbon dioxide. The chain is 8-amino-7-oxononanoate synthase from Sodalis glossinidius (strain morsitans).